We begin with the raw amino-acid sequence, 179 residues long: Translation initiation factor IF-3 (179 aa).

This sequence belongs to the IF-3 family. In terms of assembly, monomer.

It is found in the cytoplasm. In terms of biological role, IF-3 binds to the 30S ribosomal subunit and shifts the equilibrium between 70S ribosomes and their 50S and 30S subunits in favor of the free subunits, thus enhancing the availability of 30S subunits on which protein synthesis initiation begins. This is Translation initiation factor IF-3 from Leptospira borgpetersenii serovar Hardjo-bovis (strain L550).